A 451-amino-acid polypeptide reads, in one-letter code: tRNA-2-methylthio-N(6)-dimethylallyladenosine synthase (451 aa).

Residues 10–128 (KKFYTLTFGC…FPQLLEHVMQ (119 aa)) form the MTTase N-terminal domain. [4Fe-4S] cluster is bound by residues Cys-19, Cys-55, Cys-89, Cys-165, Cys-169, and Cys-172. Residues 151-381 (REDSIKAWVV…ISVQQEISEQ (231 aa)) enclose the Radical SAM core domain. Residues 384 to 447 (KDLENTVQRI…SWNLYGEIFE (64 aa)) enclose the TRAM domain.

The protein belongs to the methylthiotransferase family. MiaB subfamily. Monomer. It depends on [4Fe-4S] cluster as a cofactor.

It is found in the cytoplasm. It catalyses the reaction N(6)-dimethylallyladenosine(37) in tRNA + (sulfur carrier)-SH + AH2 + 2 S-adenosyl-L-methionine = 2-methylsulfanyl-N(6)-dimethylallyladenosine(37) in tRNA + (sulfur carrier)-H + 5'-deoxyadenosine + L-methionine + A + S-adenosyl-L-homocysteine + 2 H(+). Functionally, catalyzes the methylthiolation of N6-(dimethylallyl)adenosine (i(6)A), leading to the formation of 2-methylthio-N6-(dimethylallyl)adenosine (ms(2)i(6)A) at position 37 in tRNAs that read codons beginning with uridine. In Natranaerobius thermophilus (strain ATCC BAA-1301 / DSM 18059 / JW/NM-WN-LF), this protein is tRNA-2-methylthio-N(6)-dimethylallyladenosine synthase.